The primary structure comprises 119 residues: Ribonuclease P protein component (119 aa).

This sequence belongs to the RnpA family. In terms of assembly, consists of a catalytic RNA component (M1 or rnpB) and a protein subunit.

The enzyme catalyses Endonucleolytic cleavage of RNA, removing 5'-extranucleotides from tRNA precursor.. In terms of biological role, RNaseP catalyzes the removal of the 5'-leader sequence from pre-tRNA to produce the mature 5'-terminus. It can also cleave other RNA substrates such as 4.5S RNA. The protein component plays an auxiliary but essential role in vivo by binding to the 5'-leader sequence and broadening the substrate specificity of the ribozyme. This is Ribonuclease P protein component from Sodalis glossinidius (strain morsitans).